Here is a 140-residue protein sequence, read N- to C-terminus: Early nodulin-like protein 22 (140 aa).

The N-terminal stretch at 1-28 is a signal peptide; sequence MAQSSGHVSYVAVTVPIAIVMTVLCLFL. The Phytocyanin domain occupies 39 to 138; it reads TTYIVGGDDG…GLKMAIKALA (100 aa). The N-linked (GlcNAc...) asparagine glycan is linked to Asn-85. A disulfide bond links Cys-92 and Cys-126.

This sequence belongs to the early nodulin-like (ENODL) family.

May act as a carbohydrate transporter. The chain is Early nodulin-like protein 22 from Arabidopsis thaliana (Mouse-ear cress).